The chain runs to 132 residues: MSNKFLGTWKLTSSENFDEYMKALGVGLGTRSLGNLAGPTVIISKSGDVITIRTESGFKNTEISFKLGQEFEETTADNRKTKSTVTLAGGKLNQVQKWNGNETTIKRELVDGKMVVECSMASVVCTRIYEQV.

Ser2 carries the post-translational modification N-acetylserine. (9Z)-octadecenoate is bound at residue Arg107. Hexadecanoate is bound at residue Arg107. Cys118 and Cys125 are disulfide-bonded. Residue 127–129 (RIY) coordinates (9Z)-octadecenoate. Position 127–129 (127–129 (RIY)) interacts with hexadecanoate.

It belongs to the calycin superfamily. Fatty-acid binding protein (FABP) family. As to quaternary structure, monomer. Detected in spinal cord (at protein level).

It localises to the cytoplasm. May play a role in lipid transport protein in Schwann cells. May bind cholesterol. This chain is Myelin P2 protein (PMP2), found in Equus caballus (Horse).